Reading from the N-terminus, the 206-residue chain is Putative NAD(P)H nitroreductase MhqN (206 aa).

FMN-binding positions include 11 to 13 (RRS), 68 to 70 (QYK), 157 to 158 (IG), Arg-193, and Arg-196.

This sequence belongs to the nitroreductase family. In terms of assembly, homodimer. It depends on FMN as a cofactor.

The protein resides in the cytoplasm. In terms of biological role, putative nitroreductase that may contribute to the degradation of aromatic compounds. The protein is Putative NAD(P)H nitroreductase MhqN (mhqN) of Bacillus subtilis (strain 168).